The chain runs to 226 residues: MRKNWTDEEIRVLQNNYEYVDTEIIANFLNRSYHSIKNKATRLGISKNSEWTEDEDIYLKYFVYENDDDISKAAEFLGRTKDAVINRLVKLRKRDSSVSFIRRPWTEKEDEILKKNYIIMSNAQFAERLRRTKASVAGRKVLLGLTNKHMSKEDDKIIRHLGNQGYTIKEISAEMNLSYCLVKNYIRNHRINYRRESKNGMNGWRKEADATYSLYINAKKIKEGQA.

To L.innocua lin2408 and lin2600.

This is an uncharacterized protein from Listeria innocua serovar 6a (strain ATCC BAA-680 / CLIP 11262).